Here is a 156-residue protein sequence, read N- to C-terminus: Small ribosomal subunit protein uS7c (156 aa).

It belongs to the universal ribosomal protein uS7 family. As to quaternary structure, part of the 30S ribosomal subunit.

The protein localises to the plastid. The protein resides in the chloroplast. Functionally, one of the primary rRNA binding proteins, it binds directly to 16S rRNA where it nucleates assembly of the head domain of the 30S subunit. The polypeptide is Small ribosomal subunit protein uS7c (rps7) (Stangeria eriopus (Natal grass cycad)).